A 273-amino-acid polypeptide reads, in one-letter code: Large ribosomal subunit protein uL2 (273 aa).

Disordered stretches follow at residues 28 to 53 (KPFA…TTRH) and 221 to 273 (RGTA…RRSK). Low complexity predominate over residues 39–48 (KSGGRNNNGR).

Belongs to the universal ribosomal protein uL2 family. Part of the 50S ribosomal subunit. Forms a bridge to the 30S subunit in the 70S ribosome.

Its function is as follows. One of the primary rRNA binding proteins. Required for association of the 30S and 50S subunits to form the 70S ribosome, for tRNA binding and peptide bond formation. It has been suggested to have peptidyltransferase activity; this is somewhat controversial. Makes several contacts with the 16S rRNA in the 70S ribosome. This chain is Large ribosomal subunit protein uL2, found in Salmonella agona (strain SL483).